Here is a 482-residue protein sequence, read N- to C-terminus: Glycogen synthase (482 aa).

K18 contributes to the ADP-alpha-D-glucose binding site.

This sequence belongs to the glycosyltransferase 1 family. Bacterial/plant glycogen synthase subfamily.

The enzyme catalyses [(1-&gt;4)-alpha-D-glucosyl](n) + ADP-alpha-D-glucose = [(1-&gt;4)-alpha-D-glucosyl](n+1) + ADP + H(+). It participates in glycan biosynthesis; glycogen biosynthesis. In terms of biological role, synthesizes alpha-1,4-glucan chains using ADP-glucose. This Rhodopseudomonas palustris (strain HaA2) protein is Glycogen synthase.